Here is a 616-residue protein sequence, read N- to C-terminus: DEAD-box ATP-dependent RNA helicase 53, mitochondrial (616 aa).

Residues 1 to 81 (MITTVLRRSL…DFRASMVSQA (81 aa)) constitute a mitochondrion transit peptide. The short motif at 104–132 (LAISELGISPEIVKALSSKGIEKLFPIQK) is the Q motif element. The Helicase ATP-binding domain occupies 135–309 (LEPAMEGRDM…KKYLNNPLTV (175 aa)). Position 148–155 (148–155 (ARTGTGKT)) interacts with ATP. Positions 257–260 (DEAD) match the DEAD box motif. Positions 338–482 (IIGPLVTEHA…ELPSIAVERG (145 aa)) constitute a Helicase C-terminal domain. A disordered region spans residues 489-616 (GIGSRSGGSF…FGSNDGKRSY (128 aa)). 2 stretches are compositionally biased toward gly residues: residues 492-501 (SRSGGSFGGG) and 508-531 (SFGG…GRSG). Composition is skewed to low complexity over residues 532 to 568 (GSSN…SGGR) and 578 to 587 (GSSNNRSSGF).

The protein belongs to the DEAD box helicase family. DDX21/DDX50 subfamily.

The protein localises to the mitochondrion. The enzyme catalyses ATP + H2O = ADP + phosphate + H(+). This chain is DEAD-box ATP-dependent RNA helicase 53, mitochondrial (RH53), found in Arabidopsis thaliana (Mouse-ear cress).